Here is a 438-residue protein sequence, read N- to C-terminus: Enolase (438 aa).

2 residues coordinate substrate: His-159 and Glu-168. The Proton donor role is filled by Glu-211. Mg(2+) contacts are provided by Asp-246, Glu-297, and Asp-322. The substrate site is built by Glu-297 and Asp-322. Residue Lys-347 is the Proton acceptor of the active site. Residues Ser-374–Ser-377 and Lys-398 each bind substrate.

The protein belongs to the enolase family. Homodimer. Requires Mg(2+) as cofactor.

The protein resides in the cytoplasm. It catalyses the reaction (2R)-2-phosphoglycerate = phosphoenolpyruvate + H2O. It functions in the pathway carbohydrate degradation; glycolysis; pyruvate from D-glyceraldehyde 3-phosphate: step 4/5. Its function is as follows. Involved in osmoadaptation. The chain is Enolase (enoA) from Emericella nidulans (strain FGSC A4 / ATCC 38163 / CBS 112.46 / NRRL 194 / M139) (Aspergillus nidulans).